Here is a 301-residue protein sequence, read N- to C-terminus: Probable alpha-L-glutamate ligase (301 aa).

The ATP-grasp domain occupies 104–287 (LQLLSRRGIG…VAGMIIGYLE (184 aa)). Residues K141, 178–179 (EY), D187, and 211–213 (RSN) contribute to the ATP site. Residues D248, E260, and N262 each contribute to the Mg(2+) site. The Mn(2+) site is built by D248, E260, and N262.

It belongs to the RimK family. Mg(2+) is required as a cofactor. It depends on Mn(2+) as a cofactor.

This is Probable alpha-L-glutamate ligase from Pseudomonas syringae pv. syringae (strain B728a).